The following is a 303-amino-acid chain: Cyclin-dependent kinase B1-1 (303 aa).

Residues 4-295 form the Protein kinase domain; that stretch reads YEKLEKVGEG…AKAAMEHPYF (292 aa). Residues 10–18 and K33 contribute to the ATP site; that span reads VGEGTYGKV. At T14 the chain carries Phosphothreonine. Y15 is subject to Phosphotyrosine. The active-site Proton acceptor is the D136. Residue T170 is modified to Phosphothreonine.

It belongs to the protein kinase superfamily. CMGC Ser/Thr protein kinase family. CDC2/CDKX subfamily. As to expression, expressed in actively dividing cells: root and shoot apical meristems, and young leaves.

The enzyme catalyses L-seryl-[protein] + ATP = O-phospho-L-seryl-[protein] + ADP + H(+). It catalyses the reaction L-threonyl-[protein] + ATP = O-phospho-L-threonyl-[protein] + ADP + H(+). The catalysed reaction is [DNA-directed RNA polymerase] + ATP = phospho-[DNA-directed RNA polymerase] + ADP + H(+). The chain is Cyclin-dependent kinase B1-1 (CDKB1-1) from Oryza sativa subsp. japonica (Rice).